Consider the following 335-residue polypeptide: Carboxylesterase 1 (335 aa).

The Involved in the stabilization of the negatively charged intermediate by the formation of the oxyanion hole signature appears at 90–92 (HGG). Paraoxon contacts are provided by residues 92–93 (GG), Ser169, and Ala170. Ser169 is a catalytic residue. Residues Asp276 and His306 contribute to the active site.

It belongs to the 'GDXG' lipolytic enzyme family.

The catalysed reaction is a carboxylic ester + H2O = an alcohol + a carboxylate + H(+). Is inhibited by the organophosphates paraoxon and dimethylchlorophosphate (DMCP). Its function is as follows. Carboxylesterase acting on esters with varying acyl chain length. This is Carboxylesterase 1 (CXE1) from Actinidia eriantha (Velvet vine).